Here is a 292-residue protein sequence, read N- to C-terminus: Peroxisomal 2,4-dienoyl-CoA reductase SPS19 [(3E)-enoyl-CoA-producing] (292 aa).

Residues I36, D85, and K145 each coordinate NADP(+). The active-site Proton donor is the S162. K180 is an NADP(+) binding site. The active-site Lowers pKa of active site Tyr is the K180. K188 participates in a covalent cross-link: Glycyl lysine isopeptide (Lys-Gly) (interchain with G-Cter in ubiquitin). I209 is an NADP(+) binding site. A Microbody targeting signal motif is present at residues S290–L292.

Belongs to the short-chain dehydrogenases/reductases (SDR) family. As to quaternary structure, homodimer.

It localises to the peroxisome. It catalyses the reaction a (2E,4Z)-dienoyl-CoA + NADPH + H(+) = a 4,5-saturated-(3E)-enoyl-CoA + NADP(+). It carries out the reaction a (2E,4E)-dienoyl-CoA + NADPH + H(+) = a 4,5-saturated-(3E)-enoyl-CoA + NADP(+). Its function is as follows. Auxiliary enzyme of beta-oxidation. Participates in the degradation of unsaturated fatty enoyl-CoA esters having double bonds in both even- and odd-numbered positions in peroxisome. Catalyzes the NADP-dependent reduction of 2,4-dienoyl-CoA to yield trans-3-enoyl-CoA. Dispensable for growth and sporulation on solid acetate and oleate media, but is essential for these processes to occur on petroselineate. This is Peroxisomal 2,4-dienoyl-CoA reductase SPS19 [(3E)-enoyl-CoA-producing] (SPS19) from Saccharomyces cerevisiae (strain ATCC 204508 / S288c) (Baker's yeast).